The chain runs to 460 residues: Cysteine--tRNA ligase (460 aa).

Cysteine 28 provides a ligand contact to Zn(2+). Residues 30 to 40 carry the 'HIGH' region motif; sequence MTVYDYCHLGH. Zn(2+) is bound by residues cysteine 209, histidine 234, and glutamate 238. A 'KMSKS' region motif is present at residues 266 to 270; sequence KMSKS. Lysine 269 serves as a coordination point for ATP.

The protein belongs to the class-I aminoacyl-tRNA synthetase family. Monomer. Zn(2+) serves as cofactor.

Its subcellular location is the cytoplasm. The catalysed reaction is tRNA(Cys) + L-cysteine + ATP = L-cysteinyl-tRNA(Cys) + AMP + diphosphate. This is Cysteine--tRNA ligase from Pseudomonas putida (strain GB-1).